Consider the following 595-residue polypeptide: Guanylate-binding protein 3 (595 aa).

The interval 1 to 309 is GTPase domain (Globular); that stretch reads MAPEIHMTGP…NAISRGDLPC (309 aa). Positions 35-276 constitute a GB1/RHD3-type G domain; the sequence is TQPVVVVAIV…FCSYIFSNSK (242 aa). Residues 45–52, 67–69, and 97–101 each bind GTP; these read GLYRTGKS, LGS, and DTEGL. Positions 482-595 form a coiled coil; it reads EKEKEIEVEC…KRYMSHKLKI (114 aa).

This sequence belongs to the TRAFAC class dynamin-like GTPase superfamily. GB1/RHD3 GTPase family. GB1 subfamily. Heterodimer with other family members, including GBP1, GBP2 and GBP5. Dimerization regulates subcellular location.

Its subcellular location is the cytoplasm. It is found in the perinuclear region. It localises to the golgi apparatus membrane. It catalyses the reaction GTP + H2O = GDP + phosphate + H(+). In terms of biological role, interferon (IFN)-inducible GTPase that plays important roles in innate immunity against a diverse range of bacterial, viral and protozoan pathogens. Hydrolyzes GTP very efficiently; GDP rather than GMP is the major reaction product. Following infection, recruited to the pathogen-containing vacuoles or vacuole-escaped bacteria and acts as a positive regulator of inflammasome assembly by promoting the release of inflammasome ligands from bacteria. Acts by promoting lysis of pathogen-containing vacuoles, releasing pathogens into the cytosol. Following pathogen release in the cytosol, promotes recruitment of proteins that mediate bacterial cytolysis: this liberates ligands that are detected by inflammasomes, such as lipopolysaccharide (LPS) that activates the non-canonical CASP4/CASP11 inflammasome or double-stranded DNA (dsDNA) that activates the AIM2 inflammasome. Exhibits antiviral activity against influenza virus. Shows the most prominent antiviral activity in epithelial cells. The polypeptide is Guanylate-binding protein 3 (GBP3) (Homo sapiens (Human)).